A 23-amino-acid polypeptide reads, in one-letter code: Potassium channel toxin alpha-KTx 13.3 (23 aa).

3 cysteine pairs are disulfide-bonded: C2-C15, C5-C20, and C9-C22. The segment at G13 to C20 is interaction with Ca(2+)-activated K(+) channels. Y23 is modified (tyrosine amide).

In terms of tissue distribution, expressed by the venom gland.

Its subcellular location is the secreted. Reversibly blocks Shaker B potassium channels, with a dissociation constant of 200 nM. The protein is Potassium channel toxin alpha-KTx 13.3 of Tityus pachyurus (Colombian scorpion).